The sequence spans 265 residues: Chanoclavine-I dehydrogenase easD (265 aa).

An N-terminal signal peptide occupies residues 1–20; sequence MSFVSSKIFAITGGASGIGA. Ile18, Asp66, Arg132, Tyr169, Lys173, and Thr205 together coordinate NADP(+). Tyr169 (proton donor) is an active-site residue. The active-site Lowers pKa of active site Tyr is the Lys173.

This sequence belongs to the short-chain dehydrogenases/reductases (SDR) family. Homotetramer.

It catalyses the reaction chanoclavine-I + NAD(+) = chanoclavine-I aldehyde + NADH + H(+). The protein operates within alkaloid biosynthesis; ergot alkaloid biosynthesis. Functionally, chanoclavine-I dehydrogenase; part of the gene cluster that mediates the biosynthesis of fungal ergot alkaloid. DmaW catalyzes the first step of ergot alkaloid biosynthesis by condensing dimethylallyl diphosphate (DMAP) and tryptophan to form 4-dimethylallyl-L-tryptophan. The second step is catalyzed by the methyltransferase easF that methylates 4-dimethylallyl-L-tryptophan in the presence of S-adenosyl-L-methionine, resulting in the formation of 4-dimethylallyl-L-abrine. The catalase easC and the FAD-dependent oxidoreductase easE then transform 4-dimethylallyl-L-abrine to chanoclavine-I which is further oxidized by easD in the presence of NAD(+), resulting in the formation of chanoclavine-I aldehyde. Chanoclavine-I aldehyde is the precursor of ergoamides and ergopeptines in Clavicipitaceae, and clavine-type alcaloids such as fumiclavine in Trichocomaceae. However, the metabolites downstream of chanoclavine-I aldehyde in Arthrodermataceae have not been identified yet. The polypeptide is Chanoclavine-I dehydrogenase easD (Trichophyton verrucosum (strain HKI 0517)).